Reading from the N-terminus, the 256-residue chain is Protein FixA (256 aa).

It belongs to the ETF beta-subunit/FixA family. In terms of assembly, heterodimer of FixA and FixB.

Its pathway is amine and polyamine metabolism; carnitine metabolism. In terms of biological role, required for anaerobic carnitine reduction. May bring reductant to CaiA. The protein is Protein FixA of Escherichia coli O139:H28 (strain E24377A / ETEC).